Reading from the N-terminus, the 241-residue chain is Transcription factor HEC1 (241 aa).

A bHLH domain is found at 128–177 (ISKDPQSVAARHRRERISERIRILQRLVPGGTKMDTASMLDEAIHYVKFL).

Homodimer. Interacts with SPT. Interacts with BZIP30. In terms of tissue distribution, flowers, especially in gynoecium.

The protein resides in the nucleus. Required for the female reproductive tract development and fertility. This Arabidopsis thaliana (Mouse-ear cress) protein is Transcription factor HEC1 (HEC1).